The sequence spans 109 residues: Nucleoid-associated protein Caul_4574 (109 aa).

It belongs to the YbaB/EbfC family. As to quaternary structure, homodimer.

The protein resides in the cytoplasm. It is found in the nucleoid. Binds to DNA and alters its conformation. May be involved in regulation of gene expression, nucleoid organization and DNA protection. The sequence is that of Nucleoid-associated protein Caul_4574 from Caulobacter sp. (strain K31).